We begin with the raw amino-acid sequence, 328 residues long: Fructose-1,6-bisphosphatase class 1 (328 aa).

Residues glutamate 91, aspartate 110, leucine 112, and aspartate 113 each contribute to the Mg(2+) site. Substrate-binding positions include 113 to 116, asparagine 205, and 257 to 259; these read DGSS and YLY. Position 277 (glutamate 277) interacts with Mg(2+).

This sequence belongs to the FBPase class 1 family. Homotetramer. Mg(2+) serves as cofactor.

The protein resides in the cytoplasm. The enzyme catalyses beta-D-fructose 1,6-bisphosphate + H2O = beta-D-fructose 6-phosphate + phosphate. It functions in the pathway carbohydrate biosynthesis; gluconeogenesis. The sequence is that of Fructose-1,6-bisphosphatase class 1 from Azorhizobium caulinodans (strain ATCC 43989 / DSM 5975 / JCM 20966 / LMG 6465 / NBRC 14845 / NCIMB 13405 / ORS 571).